Consider the following 364-residue polypeptide: tRNA 2-selenouridine synthase (364 aa).

Residues 14–137 form the Rhodanese domain; the sequence is LLADTPLIDV…LRQTAIQATW (124 aa). Catalysis depends on cysteine 97, which acts as the S-selanylcysteine intermediate.

The protein belongs to the SelU family. As to quaternary structure, monomer.

It carries out the reaction 5-methylaminomethyl-2-thiouridine(34) in tRNA + selenophosphate + (2E)-geranyl diphosphate + H2O + H(+) = 5-methylaminomethyl-2-selenouridine(34) in tRNA + (2E)-thiogeraniol + phosphate + diphosphate. The enzyme catalyses 5-methylaminomethyl-2-thiouridine(34) in tRNA + (2E)-geranyl diphosphate = 5-methylaminomethyl-S-(2E)-geranyl-thiouridine(34) in tRNA + diphosphate. The catalysed reaction is 5-methylaminomethyl-S-(2E)-geranyl-thiouridine(34) in tRNA + selenophosphate + H(+) = 5-methylaminomethyl-2-(Se-phospho)selenouridine(34) in tRNA + (2E)-thiogeraniol. It catalyses the reaction 5-methylaminomethyl-2-(Se-phospho)selenouridine(34) in tRNA + H2O = 5-methylaminomethyl-2-selenouridine(34) in tRNA + phosphate. Functionally, involved in the post-transcriptional modification of the uridine at the wobble position (U34) of tRNA(Lys), tRNA(Glu) and tRNA(Gln). Catalyzes the conversion of 2-thiouridine (S2U-RNA) to 2-selenouridine (Se2U-RNA). Acts in a two-step process involving geranylation of 2-thiouridine (S2U) to S-geranyl-2-thiouridine (geS2U) and subsequent selenation of the latter derivative to 2-selenouridine (Se2U) in the tRNA chain. The chain is tRNA 2-selenouridine synthase from Salmonella enteritidis PT4 (strain P125109).